We begin with the raw amino-acid sequence, 248 residues long: UPF0736 protein BCB4264_A1231 (248 aa).

This sequence belongs to the UPF0736 family.

The sequence is that of UPF0736 protein BCB4264_A1231 from Bacillus cereus (strain B4264).